Here is a 245-residue protein sequence, read N- to C-terminus: Homeobox protein Hox-A4a (245 aa).

Residues 34–99 (DYYERPKDPG…HGPRLTTESC (66 aa)) are disordered. A compositionally biased stretch (basic and acidic residues) spans 35–51 (YYERPKDPGFPHHEEAS). Polar residues-rich tracts occupy residues 53 to 73 (PRSNYQEQSYDYGNVSTNDLN) and 82 to 99 (QPQSVSQNHGPRLTTESC). The Antp-type hexapeptide motif lies at 126–131 (VYPWMK). The homeobox DNA-binding region spans 147-206 (PKRSRTAYTRQQALELEKEFHFNRYLTRRRRVEIAHTMCLSERQVKIWFQNRRMKWKKDH). The interval 205 to 245 (DHKLPNTKIRSSSSAPSNHHVKTDATQQQQTLLPTPCSSNL) is disordered. Over residues 212–221 (KIRSSSSAPS) the composition is skewed to polar residues. Residues 230 to 245 (TQQQQTLLPTPCSSNL) show a composition bias toward low complexity.

Belongs to the Antp homeobox family. Deformed subfamily.

Its subcellular location is the nucleus. In terms of biological role, sequence-specific transcription factor which is part of a developmental regulatory system that provides cells with specific positional identities on the anterior-posterior axis. The chain is Homeobox protein Hox-A4a (hoxa4a) from Danio rerio (Zebrafish).